The sequence spans 270 residues: Thiazole synthase (270 aa).

Lys-112 functions as the Schiff-base intermediate with DXP in the catalytic mechanism. 1-deoxy-D-xylulose 5-phosphate is bound by residues Gly-173, 199–200 (AG), and 221–222 (NS).

It belongs to the ThiG family. Homotetramer. Forms heterodimers with either ThiH or ThiS.

The protein localises to the cytoplasm. The catalysed reaction is [ThiS sulfur-carrier protein]-C-terminal-Gly-aminoethanethioate + 2-iminoacetate + 1-deoxy-D-xylulose 5-phosphate = [ThiS sulfur-carrier protein]-C-terminal Gly-Gly + 2-[(2R,5Z)-2-carboxy-4-methylthiazol-5(2H)-ylidene]ethyl phosphate + 2 H2O + H(+). The protein operates within cofactor biosynthesis; thiamine diphosphate biosynthesis. Catalyzes the rearrangement of 1-deoxy-D-xylulose 5-phosphate (DXP) to produce the thiazole phosphate moiety of thiamine. Sulfur is provided by the thiocarboxylate moiety of the carrier protein ThiS. In vitro, sulfur can be provided by H(2)S. The polypeptide is Thiazole synthase (Pseudomonas putida (strain ATCC 700007 / DSM 6899 / JCM 31910 / BCRC 17059 / LMG 24140 / F1)).